The chain runs to 295 residues: Aspartate carbamoyltransferase catalytic subunit (295 aa).

Residues Arg-49 and Thr-50 each contribute to the carbamoyl phosphate site. Lys-77 is an L-aspartate binding site. Residues Arg-99, His-127, and Gln-130 each coordinate carbamoyl phosphate. Arg-161 and Arg-212 together coordinate L-aspartate. Carbamoyl phosphate is bound by residues Gly-251 and Pro-252.

Belongs to the aspartate/ornithine carbamoyltransferase superfamily. ATCase family. Heterododecamer (2C3:3R2) of six catalytic PyrB chains organized as two trimers (C3), and six regulatory PyrI chains organized as three dimers (R2).

It carries out the reaction carbamoyl phosphate + L-aspartate = N-carbamoyl-L-aspartate + phosphate + H(+). It participates in pyrimidine metabolism; UMP biosynthesis via de novo pathway; (S)-dihydroorotate from bicarbonate: step 2/3. Functionally, catalyzes the condensation of carbamoyl phosphate and aspartate to form carbamoyl aspartate and inorganic phosphate, the committed step in the de novo pyrimidine nucleotide biosynthesis pathway. The polypeptide is Aspartate carbamoyltransferase catalytic subunit (Campylobacter jejuni subsp. doylei (strain ATCC BAA-1458 / RM4099 / 269.97)).